Reading from the N-terminus, the 431-residue chain is Argininosuccinate lyase (431 aa).

It belongs to the lyase 1 family. Argininosuccinate lyase subfamily.

It is found in the cytoplasm. The enzyme catalyses 2-(N(omega)-L-arginino)succinate = fumarate + L-arginine. It participates in amino-acid biosynthesis; L-arginine biosynthesis; L-arginine from L-ornithine and carbamoyl phosphate: step 3/3. The protein is Argininosuccinate lyase of Stenotrophomonas maltophilia (strain R551-3).